The sequence spans 155 residues: Ribosomal RNA large subunit methyltransferase H (155 aa).

S-adenosyl-L-methionine is bound by residues L72, G103, and 122 to 127 (LSDLTL).

This sequence belongs to the RNA methyltransferase RlmH family. Homodimer.

It is found in the cytoplasm. The enzyme catalyses pseudouridine(1915) in 23S rRNA + S-adenosyl-L-methionine = N(3)-methylpseudouridine(1915) in 23S rRNA + S-adenosyl-L-homocysteine + H(+). Its function is as follows. Specifically methylates the pseudouridine at position 1915 (m3Psi1915) in 23S rRNA. In Verminephrobacter eiseniae (strain EF01-2), this protein is Ribosomal RNA large subunit methyltransferase H.